The following is a 156-amino-acid chain: Cyanate hydratase (156 aa).

Catalysis depends on residues R96, E99, and S122.

Belongs to the cyanase family.

The enzyme catalyses cyanate + hydrogencarbonate + 3 H(+) = NH4(+) + 2 CO2. In terms of biological role, catalyzes the reaction of cyanate with bicarbonate to produce ammonia and carbon dioxide. The polypeptide is Cyanate hydratase (Burkholderia lata (strain ATCC 17760 / DSM 23089 / LMG 22485 / NCIMB 9086 / R18194 / 383)).